Consider the following 457-residue polypeptide: Peptidyl-prolyl cis-trans isomerase FKBP5 (457 aa).

Met1 is modified (N-acetylmethionine). The disordered stretch occupies residues 1–26 (MTTDEGAKNNGESPTATVAEQGEDIT). The residue at position 13 (Ser13) is a Phosphoserine. PPIase FKBP-type domains lie at 50-138 (GDKV…LDFK) and 165-251 (GATV…KSFE). 3 TPR repeats span residues 268–301 (AAIVKEKGTVYFKGGKYMQAVIQYGKIVSWLEME), 317–350 (LAAFLNLAMCYSKLREYTKAVECCDKALGLDSAN), and 351–384 (GKGLYRRGEAQLLMNEFESAKGDFEKVLEVNPQN). Residues 420–457 (DAKEEANKAMGKKTSEGVTNEKGTDSQAMEEEKPEGHV) form a disordered region. At Ser445 the chain carries Phosphoserine.

Part of a heteromultimeric cytoplasmic complex with HSP90AA1, HSPA1A/HSPA1B and steroid receptors. Upon ligand binding dissociates from the complex and FKBP4 takes its place. Interacts with functionally mature heterooligomeric progesterone receptor complexes along with HSP90 and TEBP. Interacts with IFI44L; this interaction modulates the kinase activity of IKBKB and IKBKE. Interacts with IKBKB and IKBKE.

The protein resides in the cytoplasm. Its subcellular location is the nucleus. The enzyme catalyses [protein]-peptidylproline (omega=180) = [protein]-peptidylproline (omega=0). Its activity is regulated as follows. Inhibited by FK506 but not cyclosporin. Functionally, immunophilin protein with PPIase and co-chaperone activities. Component of unligated steroid receptors heterocomplexes through interaction with heat-shock protein 90 (HSP90). Plays a role in the intracellular trafficking of heterooligomeric forms of steroid hormone receptors maintaining the complex into the cytoplasm when unliganded. Acts as a regulator of Akt/AKT1 activity by promoting the interaction between Akt/AKT1 and PHLPP1, thereby enhancing dephosphorylation and subsequent activation of Akt/AKT1. Interacts with IKBKE and IKBKB which facilitates IKK complex assembly leading to increased IKBKE and IKBKB kinase activity, NF-kappaB activation, and IFN production. This Pongo abelii (Sumatran orangutan) protein is Peptidyl-prolyl cis-trans isomerase FKBP5 (FKBP5).